A 319-amino-acid polypeptide reads, in one-letter code: Forkhead box protein E3 (319 aa).

Positions 1–69 (MAGRSDMDPP…GRRRRRPLQR (69 aa)) are disordered. Residues 44–53 (AAAGRGEAAP) show a composition bias toward low complexity. A DNA-binding region (fork-head) is located at residues 71–165 (KPPYSYIALI…DNGSFLRRRK (95 aa)).

The protein resides in the nucleus. Its function is as follows. Transcription factor that controls lens epithelial cell growth through regulation of proliferation, apoptosis and cell cycle. During lens development, controls the ratio of the lens fiber cells to the cells of the anterior lens epithelium by regulating the rate of proliferation and differentiation. Controls lens vesicle closure and subsequent separation of the lens vesicle from ectoderm. Controls the expression of DNAJB1 in a pathway that is crucial for the development of the anterior segment of the eye. The protein is Forkhead box protein E3 (FOXE3) of Homo sapiens (Human).